Here is a 459-residue protein sequence, read N- to C-terminus: Cysteine--tRNA ligase (459 aa).

C28 provides a ligand contact to Zn(2+). The 'HIGH' region motif lies at 30–40; that stretch reads VTIYDLCHIGH. C209, H234, and E238 together coordinate Zn(2+). A 'KMSKS' region motif is present at residues 266-270; sequence KMSKS. K269 lines the ATP pocket.

The protein belongs to the class-I aminoacyl-tRNA synthetase family. As to quaternary structure, monomer. Zn(2+) serves as cofactor.

It is found in the cytoplasm. It catalyses the reaction tRNA(Cys) + L-cysteine + ATP = L-cysteinyl-tRNA(Cys) + AMP + diphosphate. The chain is Cysteine--tRNA ligase from Shewanella baltica (strain OS223).